The primary structure comprises 124 residues: MPTIQQLVRKGRSPKVVNTKAPALQGNPMRRGVCTRVYTTTPKKPNSALRKVARVRLNGGIEVTAYIPGEGHNLQEHSIVLVRGGRVKDLPGVRYKIVRGALDTQGVKNRGQARSRYGAKKEKK.

Position 89 is a 3-methylthioaspartic acid (D89). The segment at 104-124 (TQGVKNRGQARSRYGAKKEKK) is disordered. Positions 111–124 (GQARSRYGAKKEKK) are enriched in basic residues.

Belongs to the universal ribosomal protein uS12 family. In terms of assembly, part of the 30S ribosomal subunit. Contacts proteins S8 and S17. May interact with IF1 in the 30S initiation complex.

Functionally, with S4 and S5 plays an important role in translational accuracy. Interacts with and stabilizes bases of the 16S rRNA that are involved in tRNA selection in the A site and with the mRNA backbone. Located at the interface of the 30S and 50S subunits, it traverses the body of the 30S subunit contacting proteins on the other side and probably holding the rRNA structure together. The combined cluster of proteins S8, S12 and S17 appears to hold together the shoulder and platform of the 30S subunit. This chain is Small ribosomal subunit protein uS12, found in Micrococcus luteus (strain ATCC 4698 / DSM 20030 / JCM 1464 / CCM 169 / CCUG 5858 / IAM 1056 / NBRC 3333 / NCIMB 9278 / NCTC 2665 / VKM Ac-2230) (Micrococcus lysodeikticus).